We begin with the raw amino-acid sequence, 84 residues long: MFMADAYLADTVWYVGQIIFIVAICLLVIIVVVAFLATFKLCIQLCGMCNTLVLSPSIYVFNRGRQFYEFYNDVKPPVLDVDDV.

The Virion surface portion of the chain corresponds to 1–18; that stretch reads MFMADAYLADTVWYVGQI. The chain crosses the membrane as a helical span at residues 19–39; sequence IFIVAICLLVIIVVVAFLATF. Over 40-80 the chain is Intravirion; that stretch reads KLCIQLCGMCNTLVLSPSIYVFNRGRQFYEFYNDVKPPVLD.

Belongs to the betacoronaviruses E protein family. As to quaternary structure, homopentamer. Interacts with membrane protein M in the budding compartment of the host cell, which is located between endoplasmic reticulum and the Golgi complex. Interacts with Nucleoprotein.

The protein resides in the host Golgi apparatus membrane. Functionally, plays a central role in virus morphogenesis and assembly. Acts as a viroporin and self-assembles in host membranes forming pentameric protein-lipid pores that allow ion transport. Also plays a role in the induction of apoptosis. This chain is Envelope small membrane protein, found in Porcine hemagglutinating encephalomyelitis virus (strain 67N) (HEV-67N).